The primary structure comprises 434 residues: ATP-sensitive inward rectifier potassium channel 14 (434 aa).

The Cytoplasmic segment spans residues 1–81 (MGLARALRRL…LSDLFTTCVD (81 aa)). Cys-79 carries the S-nitrosocysteine modification. Residues 82–108 (VRWRWMCLLFSCSFLASWLLFGLTFWL) traverse the membrane as a helical segment. Residues 109–131 (IASLHGDLAAPPPPAPCFSQVAS) are Extracellular-facing. The segment at residues 132-148 (FLAAFLFALETQTSIGY) is an intramembrane region (helical; Pore-forming). Residues 145–150 (SIGYGV) carry the Selectivity filter motif. Residues 149–157 (GVRSVTEEC) are Extracellular-facing. The helical transmembrane segment at 158 to 185 (PAAVAAVVLQCIAGCVLDAFVVGAVMAK) threads the bilayer. Residues 186–434 (MAKPKKRNET…TPTLALTLPP (249 aa)) are Cytoplasmic-facing. The disordered stretch occupies residues 398–434 (QEEDEEEDTKEGTSAETPDRAASPQALTPTLALTLPP). Residues 407-416 (KEGTSAETPD) are compositionally biased toward basic and acidic residues. Residues 418 to 434 (AASPQALTPTLALTLPP) show a composition bias toward low complexity.

It belongs to the inward rectifier-type potassium channel (TC 1.A.2.1) family. KCNJ14 subfamily. Expressed predominantly in motoneurons of cranial nerve motor nuclei within the general somatic and special visceral motor cell column.

Its subcellular location is the membrane. The catalysed reaction is K(+)(in) = K(+)(out). Its activity is regulated as follows. Channel activity is regulated by variations of cytosolic pH; channels are activated by alkaline and inhibited by acidic pH values. Inhibited by Ba(2+) and Cs(+) in a voltage-dependent manner; sensitivity to those inhibitors is lower than in other Kir channels. Inward rectifier potassium channels are characterized by a greater tendency to allow potassium to flow into the cell rather than out of it. Their voltage dependence is regulated by the concentration of extracellular potassium; as external potassium is raised, the voltage range of the channel opening shifts to more positive voltages. In Rattus norvegicus (Rat), this protein is ATP-sensitive inward rectifier potassium channel 14 (Kcnj14).